Here is a 368-residue protein sequence, read N- to C-terminus: MTTKQICFADRCFNFAFGEHVLESVESYIPRDEFDQYIMISDSGVPDSIVHYAAEYFGKLAPVHILRFQGGEEYKTLSTVTNLQERAIALGANRRTAIVAVGGGLTGNVAGVAAGMMFRGIALIHVPTTFLAASDSVLSIKQAVNLTSGKNLVGFYYPPRFVFADTRILSESPPRQVKAGMCELVKNMLILENDNKEFTEDDLNSANVYSPKQLETFINFCISAKMSVLSEDIYEKKKGLIFEYGHTIGHAIELAEQGGITHGEAIAVGMIYAAKIANRMNLMPEHDVSAHYWLLNKIGALQDIPLKSDPDSIFHYLIHDNKRGYIKLDEDNLGMILLSGVGKPAMYNQTLLTPVRKTLIKEVIREGL.

NAD(+)-binding positions include D42, 72 to 75 (EEYK), 104 to 108 (GLTGN), 128 to 129 (TT), 139 to 141 (SIK), 150 to 151 (KN), and Q176. K141 is an active-site residue. E183 is a binding site for Co(2+). E243 is a catalytic residue. 2 residues coordinate Co(2+): H246 and H262.

This sequence belongs to the sugar phosphate cyclases superfamily. DOI synthase family. As to quaternary structure, was isolated as a heterodimeric enzyme comprising of BtrC and a smaller polypeptide further identified as PdxT by sequence homology. Homodimer in solution. It depends on NAD(+) as a cofactor. Co(2+) serves as cofactor.

The enzyme catalyses D-glucose 6-phosphate = 2-deoxy-L-scyllo-inosose + phosphate. It functions in the pathway metabolic intermediate biosynthesis; 2-deoxystreptamine biosynthesis; 2-deoxystreptamine from D-glucose 6-phosphate: step 1/4. The protein operates within antibiotic biosynthesis; butirosin biosynthesis. With respect to regulation, strongly inhibited by EDTA, zinc and Cu(2+). Functionally, catalyzes the intramolecular carbocycle formation from D-glucose-6-phosphate to 2-deoxy-scyllo-inosose (DOI). The polypeptide is 2-deoxy-scyllo-inosose synthase (btrC) (Niallia circulans (Bacillus circulans)).